A 257-amino-acid chain; its full sequence is Hydroxyacylglutathione hydrolase (257 aa).

Positions 58, 60, 62, 63, 116, 135, and 173 each coordinate Zn(2+).

It belongs to the metallo-beta-lactamase superfamily. Glyoxalase II family. Monomer. Zn(2+) serves as cofactor.

The catalysed reaction is an S-(2-hydroxyacyl)glutathione + H2O = a 2-hydroxy carboxylate + glutathione + H(+). It participates in secondary metabolite metabolism; methylglyoxal degradation; (R)-lactate from methylglyoxal: step 2/2. In terms of biological role, thiolesterase that catalyzes the hydrolysis of S-D-lactoyl-glutathione to form glutathione and D-lactic acid. The chain is Hydroxyacylglutathione hydrolase from Brucella melitensis biotype 1 (strain ATCC 23456 / CCUG 17765 / NCTC 10094 / 16M).